The following is an 82-amino-acid chain: Small ribosomal subunit protein bS18 (82 aa).

Belongs to the bacterial ribosomal protein bS18 family. In terms of assembly, part of the 30S ribosomal subunit. Forms a tight heterodimer with protein bS6.

Binds as a heterodimer with protein bS6 to the central domain of the 16S rRNA, where it helps stabilize the platform of the 30S subunit. The polypeptide is Small ribosomal subunit protein bS18 (Rhizobium rhizogenes (strain K84 / ATCC BAA-868) (Agrobacterium radiobacter)).